Reading from the N-terminus, the 408-residue chain is Putative glutamate--cysteine ligase 2 (408 aa).

The protein belongs to the glutamate--cysteine ligase type 2 family. YbdK subfamily.

It catalyses the reaction L-cysteine + L-glutamate + ATP = gamma-L-glutamyl-L-cysteine + ADP + phosphate + H(+). Functionally, ATP-dependent carboxylate-amine ligase which exhibits weak glutamate--cysteine ligase activity. The protein is Putative glutamate--cysteine ligase 2 of Bradyrhizobium sp. (strain BTAi1 / ATCC BAA-1182).